Here is a 654-residue protein sequence, read N- to C-terminus: uncharacterized protein (654 aa).

The segment covering 1 to 13 has biased composition (polar residues); the sequence is MSNLILTPSNNGT. The disordered stretch occupies residues 1–23; sequence MSNLILTPSNNGTERPYRSRKTR. A DNA-binding region (zn(2)-C6 fungal-type) is located at residues 25–54; it reads CDNCRLRKSRCVVESIGNPCLLCTQLKIPC. Residues 63-96 are disordered; that stretch reads RNKQKKQQDSVSDDTPSEATTTTNDDRDPKYNAL.

The protein localises to the cytoplasm. It localises to the nucleus. This is an uncharacterized protein from Schizosaccharomyces pombe (strain 972 / ATCC 24843) (Fission yeast).